Consider the following 466-residue polypeptide: Putative outer membrane protein NMB0088 (466 aa).

An N-terminal signal peptide occupies residues 1–24; sequence MTPSALKKTVLLLGTAFAAASVHA.

The protein belongs to the OmpP1/FadL family.

Its subcellular location is the cell outer membrane. The protein is Putative outer membrane protein NMB0088 of Neisseria meningitidis serogroup B (strain ATCC BAA-335 / MC58).